We begin with the raw amino-acid sequence, 330 residues long: D-cysteine desulfhydrase (330 aa).

K52 carries the N6-(pyridoxal phosphate)lysine modification.

The protein belongs to the ACC deaminase/D-cysteine desulfhydrase family. In terms of assembly, homodimer. Pyridoxal 5'-phosphate is required as a cofactor.

It carries out the reaction D-cysteine + H2O = hydrogen sulfide + pyruvate + NH4(+) + H(+). Functionally, catalyzes the alpha,beta-elimination reaction of D-cysteine and of several D-cysteine derivatives. It could be a defense mechanism against D-cysteine. This is D-cysteine desulfhydrase from Yersinia enterocolitica serotype O:8 / biotype 1B (strain NCTC 13174 / 8081).